We begin with the raw amino-acid sequence, 459 residues long: Uterine milk protein (459 aa).

The signal sequence occupies residues methionine 1–cysteine 25. Asparagine 268 carries an N-linked (GlcNAc...) asparagine glycan.

Belongs to the serpin family. UTMP subfamily.

In Bos taurus (Bovine), this protein is Uterine milk protein.